The following is a 512-amino-acid chain: tRNA-2-methylthio-N(6)-dimethylallyladenosine synthase (512 aa).

One can recognise an MTTase N-terminal domain in the interval 17 to 133; that stretch reads RTYEVRTFGC…LPTLLERSAH (117 aa). The [4Fe-4S] cluster site is built by C26, C62, C96, C170, C174, and C177. Residues 156–392 enclose the Radical SAM core domain; sequence RESAYAGWVS…LALQERISEE (237 aa). The TRAM domain occupies 395-461; sequence RKLIGTTQEL…PHFLIADGGV (67 aa). Positions 473–512 are disordered; the sequence is TELGETPTTAPVGVGLGMPSIKKPEPTTAGGCSTGGCGCE.

The protein belongs to the methylthiotransferase family. MiaB subfamily. Monomer. [4Fe-4S] cluster serves as cofactor.

The protein localises to the cytoplasm. It catalyses the reaction N(6)-dimethylallyladenosine(37) in tRNA + (sulfur carrier)-SH + AH2 + 2 S-adenosyl-L-methionine = 2-methylsulfanyl-N(6)-dimethylallyladenosine(37) in tRNA + (sulfur carrier)-H + 5'-deoxyadenosine + L-methionine + A + S-adenosyl-L-homocysteine + 2 H(+). Catalyzes the methylthiolation of N6-(dimethylallyl)adenosine (i(6)A), leading to the formation of 2-methylthio-N6-(dimethylallyl)adenosine (ms(2)i(6)A) at position 37 in tRNAs that read codons beginning with uridine. This Corynebacterium jeikeium (strain K411) protein is tRNA-2-methylthio-N(6)-dimethylallyladenosine synthase.